Consider the following 222-residue polypeptide: N-(5'-phosphoribosyl)anthranilate isomerase (222 aa).

Belongs to the TrpF family.

The enzyme catalyses N-(5-phospho-beta-D-ribosyl)anthranilate = 1-(2-carboxyphenylamino)-1-deoxy-D-ribulose 5-phosphate. The protein operates within amino-acid biosynthesis; L-tryptophan biosynthesis; L-tryptophan from chorismate: step 3/5. This Xanthomonas oryzae pv. oryzae (strain PXO99A) protein is N-(5'-phosphoribosyl)anthranilate isomerase.